We begin with the raw amino-acid sequence, 431 residues long: Enolase (431 aa).

Gln-162 contacts (2R)-2-phosphoglycerate. Residue Glu-204 is the Proton donor of the active site. 3 residues coordinate Mg(2+): Asp-241, Glu-284, and Asp-311. 4 residues coordinate (2R)-2-phosphoglycerate: Lys-336, Arg-365, Ser-366, and Lys-387. Residue Lys-336 is the Proton acceptor of the active site.

The protein belongs to the enolase family. It depends on Mg(2+) as a cofactor.

The protein localises to the cytoplasm. It is found in the secreted. Its subcellular location is the cell surface. The catalysed reaction is (2R)-2-phosphoglycerate = phosphoenolpyruvate + H2O. The protein operates within carbohydrate degradation; glycolysis; pyruvate from D-glyceraldehyde 3-phosphate: step 4/5. Catalyzes the reversible conversion of 2-phosphoglycerate (2-PG) into phosphoenolpyruvate (PEP). It is essential for the degradation of carbohydrates via glycolysis. The polypeptide is Enolase (Sorangium cellulosum (strain So ce56) (Polyangium cellulosum (strain So ce56))).